Consider the following 164-residue polypeptide: Phosphopantetheine adenylyltransferase (164 aa).

Serine 9 lines the substrate pocket. Residues 9-10 (SF) and histidine 17 each bind ATP. Residues lysine 41, valine 78, and arginine 92 each coordinate substrate. ATP-binding positions include 93-95 (GLR), glutamate 103, and 128-134 (SRPITAT).

The protein belongs to the bacterial CoaD family. In terms of assembly, homohexamer. Requires Mg(2+) as cofactor.

It is found in the cytoplasm. The enzyme catalyses (R)-4'-phosphopantetheine + ATP + H(+) = 3'-dephospho-CoA + diphosphate. The protein operates within cofactor biosynthesis; coenzyme A biosynthesis; CoA from (R)-pantothenate: step 4/5. In terms of biological role, reversibly transfers an adenylyl group from ATP to 4'-phosphopantetheine, yielding dephospho-CoA (dPCoA) and pyrophosphate. This Rhizobium etli (strain ATCC 51251 / DSM 11541 / JCM 21823 / NBRC 15573 / CFN 42) protein is Phosphopantetheine adenylyltransferase.